The chain runs to 404 residues: Cysteine desulfurase IscS (404 aa).

Pyridoxal 5'-phosphate contacts are provided by residues 75–76, asparagine 155, glutamine 183, and 203–205; these read AT and SAH. Lysine 206 bears the N6-(pyridoxal phosphate)lysine mark. Threonine 243 is a pyridoxal 5'-phosphate binding site. The active-site Cysteine persulfide intermediate is the cysteine 328. Cysteine 328 is a [2Fe-2S] cluster binding site.

The protein belongs to the class-V pyridoxal-phosphate-dependent aminotransferase family. NifS/IscS subfamily. In terms of assembly, homodimer. Forms a heterotetramer with IscU, interacts with other sulfur acceptors. Requires pyridoxal 5'-phosphate as cofactor.

The protein resides in the cytoplasm. The catalysed reaction is (sulfur carrier)-H + L-cysteine = (sulfur carrier)-SH + L-alanine. The protein operates within cofactor biosynthesis; iron-sulfur cluster biosynthesis. Functionally, master enzyme that delivers sulfur to a number of partners involved in Fe-S cluster assembly, tRNA modification or cofactor biosynthesis. Catalyzes the removal of elemental sulfur atoms from cysteine to produce alanine. Functions as a sulfur delivery protein for Fe-S cluster synthesis onto IscU, an Fe-S scaffold assembly protein, as well as other S acceptor proteins. This chain is Cysteine desulfurase IscS, found in Pseudomonas fluorescens (strain Pf0-1).